The chain runs to 353 residues: Photosystem II protein D1 (353 aa).

An N-acetylthreonine modification is found at T2. Position 2 is a phosphothreonine (T2). Helical transmembrane passes span 29–46, 118–133, and 142–156; these read YIGW…TATS, HFLL…EWEL, and WIAV…AATA. H118 contacts chlorophyll a. Y126 contributes to the pheophytin a binding site. Residues D170 and E189 each contribute to the [CaMn4O5] cluster site. Residues 197 to 218 traverse the membrane as a helical segment; that stretch reads FHMLGVAGVFGGSLFSAMHGSL. H198 is a chlorophyll a binding site. A quinone is bound by residues H215 and 264–265; that span reads SF. Position 215 (H215) interacts with Fe cation. Residue H272 participates in Fe cation binding. Residues 274–288 form a helical membrane-spanning segment; the sequence is FLAAWPVVGIWFTSL. 4 residues coordinate [CaMn4O5] cluster: H332, E333, D342, and A344. Residues 345-353 constitute a propeptide that is removed on maturation; sequence AIDAPSVNG.

This sequence belongs to the reaction center PufL/M/PsbA/D family. In terms of assembly, PSII is composed of 1 copy each of membrane proteins PsbA, PsbB, PsbC, PsbD, PsbE, PsbF, PsbH, PsbI, PsbJ, PsbK, PsbL, PsbM, PsbT, PsbX, PsbY, PsbZ, Psb30/Ycf12, at least 3 peripheral proteins of the oxygen-evolving complex and a large number of cofactors. It forms dimeric complexes. The D1/D2 heterodimer binds P680, chlorophylls that are the primary electron donor of PSII, and subsequent electron acceptors. It shares a non-heme iron and each subunit binds pheophytin, quinone, additional chlorophylls, carotenoids and lipids. D1 provides most of the ligands for the Mn4-Ca-O5 cluster of the oxygen-evolving complex (OEC). There is also a Cl(-1) ion associated with D1 and D2, which is required for oxygen evolution. The PSII complex binds additional chlorophylls, carotenoids and specific lipids. serves as cofactor. In terms of processing, tyr-161 forms a radical intermediate that is referred to as redox-active TyrZ, YZ or Y-Z. Post-translationally, C-terminally processed by CTPA; processing is essential to allow assembly of the oxygen-evolving complex and thus photosynthetic growth.

The protein localises to the plastid. The protein resides in the chloroplast thylakoid membrane. The enzyme catalyses 2 a plastoquinone + 4 hnu + 2 H2O = 2 a plastoquinol + O2. In terms of biological role, photosystem II (PSII) is a light-driven water:plastoquinone oxidoreductase that uses light energy to abstract electrons from H(2)O, generating O(2) and a proton gradient subsequently used for ATP formation. It consists of a core antenna complex that captures photons, and an electron transfer chain that converts photonic excitation into a charge separation. The D1/D2 (PsbA/PsbD) reaction center heterodimer binds P680, the primary electron donor of PSII as well as several subsequent electron acceptors. This chain is Photosystem II protein D1, found in Coffea arabica (Arabian coffee).